Here is a 93-residue protein sequence, read N- to C-terminus: UPF0213 protein CPE1444 (93 aa).

One can recognise a GIY-YIG domain in the interval 1–75 (MNYVYILKCK…KKLTRNQKLQ (75 aa)).

The protein belongs to the UPF0213 family.

The chain is UPF0213 protein CPE1444 from Clostridium perfringens (strain 13 / Type A).